The primary structure comprises 356 residues: sn-glycerol-3-phosphate import ATP-binding protein UgpC (356 aa).

The 232-residue stretch at 4–235 folds into the ABC transporter domain; that stretch reads LKLQAVTKSW…PASLFVASFI (232 aa). Residue 37–44 coordinates ATP; the sequence is GPSGCGKS.

It belongs to the ABC transporter superfamily. sn-glycerol-3-phosphate importer (TC 3.A.1.1.3) family. The complex is composed of two ATP-binding proteins (UgpC), two transmembrane proteins (UgpA and UgpE) and a solute-binding protein (UgpB).

The protein resides in the cell inner membrane. It carries out the reaction sn-glycerol 3-phosphate(out) + ATP + H2O = sn-glycerol 3-phosphate(in) + ADP + phosphate + H(+). In terms of biological role, part of the ABC transporter complex UgpBAEC involved in sn-glycerol-3-phosphate (G3P) import. Responsible for energy coupling to the transport system. This is sn-glycerol-3-phosphate import ATP-binding protein UgpC from Shigella sonnei (strain Ss046).